The primary structure comprises 102 residues: Small ribosomal subunit protein uS10 (102 aa).

The protein belongs to the universal ribosomal protein uS10 family. Part of the 30S ribosomal subunit.

Involved in the binding of tRNA to the ribosomes. In Dehalococcoides mccartyi (strain ATCC BAA-2100 / JCM 16839 / KCTC 5957 / BAV1), this protein is Small ribosomal subunit protein uS10.